A 119-amino-acid polypeptide reads, in one-letter code: Large ribosomal subunit protein bL20 (119 aa).

The protein belongs to the bacterial ribosomal protein bL20 family.

Its function is as follows. Binds directly to 23S ribosomal RNA and is necessary for the in vitro assembly process of the 50S ribosomal subunit. It is not involved in the protein synthesizing functions of that subunit. The chain is Large ribosomal subunit protein bL20 from Jannaschia sp. (strain CCS1).